We begin with the raw amino-acid sequence, 554 residues long: Phosphomethylpyrimidine synthase (554 aa).

Residues Asn-188, Met-217, Tyr-246, His-282, 302–304 (SRG), 343–346 (DGLR), and Glu-382 contribute to the substrate site. His-386 lines the Zn(2+) pocket. Tyr-409 contributes to the substrate binding site. A Zn(2+)-binding site is contributed by His-450. The [4Fe-4S] cluster site is built by Cys-530, Cys-533, and Cys-538.

This sequence belongs to the ThiC family. As to quaternary structure, homodimer. [4Fe-4S] cluster is required as a cofactor.

The enzyme catalyses 5-amino-1-(5-phospho-beta-D-ribosyl)imidazole + S-adenosyl-L-methionine = 4-amino-2-methyl-5-(phosphooxymethyl)pyrimidine + CO + 5'-deoxyadenosine + formate + L-methionine + 3 H(+). Its pathway is cofactor biosynthesis; thiamine diphosphate biosynthesis. In terms of biological role, catalyzes the synthesis of the hydroxymethylpyrimidine phosphate (HMP-P) moiety of thiamine from aminoimidazole ribotide (AIR) in a radical S-adenosyl-L-methionine (SAM)-dependent reaction. The protein is Phosphomethylpyrimidine synthase of Coxiella burnetii (strain Dugway 5J108-111).